A 664-amino-acid chain; its full sequence is Transketolase 1 (664 aa).

Histidine 26 lines the substrate pocket. Residues histidine 66 and 114 to 116 (GPL) each bind thiamine diphosphate. Aspartate 155 contributes to the Mg(2+) binding site. Thiamine diphosphate-binding residues include glycine 156 and asparagine 185. 2 residues coordinate Mg(2+): asparagine 185 and isoleucine 187. Residues histidine 260, arginine 357, and serine 384 each coordinate substrate. A thiamine diphosphate-binding site is contributed by histidine 260. Glutamate 411 functions as the Proton donor in the catalytic mechanism. A thiamine diphosphate-binding site is contributed by phenylalanine 437. Substrate is bound by residues histidine 461, aspartate 469, and arginine 520.

It belongs to the transketolase family. In terms of assembly, homodimer. Mg(2+) is required as a cofactor. Requires Ca(2+) as cofactor. Mn(2+) serves as cofactor. It depends on Co(2+) as a cofactor. The cofactor is thiamine diphosphate.

The catalysed reaction is D-sedoheptulose 7-phosphate + D-glyceraldehyde 3-phosphate = aldehydo-D-ribose 5-phosphate + D-xylulose 5-phosphate. Catalyzes the transfer of a two-carbon ketol group from a ketose donor to an aldose acceptor, via a covalent intermediate with the cofactor thiamine pyrophosphate. The sequence is that of Transketolase 1 (tkt1) from Vibrio vulnificus (strain YJ016).